Here is a 288-residue protein sequence, read N- to C-terminus: 2-hydroxy-6-oxononadienedioate/2-hydroxy-6-oxononatrienedioate hydrolase (288 aa).

Residues Val38 to His273 form the AB hydrolase-1 domain. The active-site Proton acceptor is His267.

This sequence belongs to the AB hydrolase superfamily. MhpC family. In terms of assembly, homodimer.

The enzyme catalyses (2Z,4E)-2-hydroxy-6-oxonona-2,4-dienedioate + H2O = (2Z)-2-hydroxypenta-2,4-dienoate + succinate + H(+). The catalysed reaction is (2Z,4E,7E)-2-hydroxy-6-oxonona-2,4,7-trienedioate + H2O = (2Z)-2-hydroxypenta-2,4-dienoate + fumarate + H(+). The protein operates within aromatic compound metabolism; 3-phenylpropanoate degradation. Catalyzes the cleavage of the C5-C6 bond of 2-hydroxy-6-oxononadienedioate and 2-hydroxy-6-oxononatrienedioate, a dienol ring fission product of the bacterial meta-cleavage pathway for degradation of phenylpropionic acid. The polypeptide is 2-hydroxy-6-oxononadienedioate/2-hydroxy-6-oxononatrienedioate hydrolase (Escherichia coli O139:H28 (strain E24377A / ETEC)).